A 176-amino-acid polypeptide reads, in one-letter code: Large ribosomal subunit protein uL10 (176 aa).

Belongs to the universal ribosomal protein uL10 family. Part of the ribosomal stalk of the 50S ribosomal subunit. The N-terminus interacts with L11 and the large rRNA to form the base of the stalk. The C-terminus forms an elongated spine to which L12 dimers bind in a sequential fashion forming a multimeric L10(L12)X complex.

Forms part of the ribosomal stalk, playing a central role in the interaction of the ribosome with GTP-bound translation factors. This chain is Large ribosomal subunit protein uL10, found in Carboxydothermus hydrogenoformans (strain ATCC BAA-161 / DSM 6008 / Z-2901).